The following is a 394-amino-acid chain: Protein TsgA homolog (394 aa).

The next 12 membrane-spanning stretches (helical) occupy residues 11 to 31 (WISY…GIVM), 51 to 71 (FLNA…EIIP), 76 to 96 (LVFG…GHNL), 101 to 121 (ISMF…TFLV), 134 to 154 (LLFT…AAAM), 162 to 182 (WYWV…LTLC), 206 to 226 (VGVL…LGFI), 246 to 266 (QLVS…SFIL), 274 to 294 (IVTV…STDN), 302 to 322 (ILAL…LGSL), 334 to 354 (FILT…GPIV), and 363 to 383 (LETA…LGFF).

This sequence belongs to the major facilitator superfamily. TsgA family.

Its subcellular location is the cell inner membrane. The chain is Protein TsgA homolog from Yersinia pestis bv. Antiqua (strain Antiqua).